A 269-amino-acid polypeptide reads, in one-letter code: Phosphate import ATP-binding protein PstB (269 aa).

An ABC transporter domain is found at 22-264; it reads IKVKNVDFFY…PANKKTEDYI (243 aa). 55–62 provides a ligand contact to ATP; sequence GSSGSGKS.

It belongs to the ABC transporter superfamily. Phosphate importer (TC 3.A.1.7) family. In terms of assembly, the complex is composed of two ATP-binding proteins (PstB), two transmembrane proteins (PstC and PstA) and a solute-binding protein (PstS).

The protein localises to the cell membrane. The enzyme catalyses phosphate(out) + ATP + H2O = ADP + 2 phosphate(in) + H(+). In terms of biological role, part of the ABC transporter complex PstSACB involved in phosphate import. Responsible for energy coupling to the transport system. This is Phosphate import ATP-binding protein PstB from Spiroplasma kunkelii.